Consider the following 1462-residue polypeptide: DNA topoisomerase 2 (1462 aa).

ATP contacts are provided by residues asparagine 79, asparagine 108, 136–138 (SSN), and 149–156 (GRNGYGAK). The interaction with DNA stretch occupies residues 332-334 (NKK). Residue 365–367 (QTK) participates in ATP binding. Residues 442-556 (CTLILTEGDS…SLLKVPSFLV (115 aa)) enclose the Toprim domain. Residues glutamate 448, aspartate 525, and aspartate 527 each contribute to the Mg(2+) site. Positions 671–1131 (KDFVNKELIL…PTTSLWLKDL (461 aa)) constitute a Topo IIA-type catalytic domain. Catalysis depends on tyrosine 761, which acts as the O-(5'-phospho-DNA)-tyrosine intermediate. The interaction with DNA stretch occupies residues 947 to 956 (KLTSTISTSN). Disordered stretches follow at residues 1040–1077 (PMPR…SVSV) and 1147–1462 (EDDR…EDDD). The span at 1056-1068 (NDDDSEEQEDAEP) shows a compositional bias: acidic residues. Residues 1167–1181 (PAKKPPQPRKNTKKA) show a composition bias toward basic residues. Low complexity predominate over residues 1198 to 1207 (AVEAAKPAEV). The segment covering 1240-1250 (IESSGEKSQAM) has biased composition (polar residues). Basic residues predominate over residues 1260 to 1275 (AGKKQNNKRGGAKKKS). The segment covering 1282–1300 (SDSDNEVNDVDDDDDDFEE) has biased composition (acidic residues). Low complexity-rich tracts occupy residues 1314-1334 (KPAA…APAA) and 1419-1430 (APQPARARPQRA). Residues 1442–1462 (SESEEDSDEDAELSDFEEDDD) are compositionally biased toward acidic residues.

Belongs to the type II topoisomerase family. As to quaternary structure, homodimer. Mg(2+) serves as cofactor. Requires Mn(2+) as cofactor. Ca(2+) is required as a cofactor. Abundant in proliferative tissues.

The enzyme catalyses ATP-dependent breakage, passage and rejoining of double-stranded DNA.. Control of topological states of DNA by transient breakage and subsequent rejoining of DNA strands. Topoisomerase II makes double-strand breaks. In Pisum sativum (Garden pea), this protein is DNA topoisomerase 2 (TOP2).